We begin with the raw amino-acid sequence, 52 residues long: Large ribosomal subunit protein bL32c (52 aa).

This sequence belongs to the bacterial ribosomal protein bL32 family.

It localises to the plastid. Its subcellular location is the chloroplast. The chain is Large ribosomal subunit protein bL32c from Nymphaea alba (White water-lily).